The following is an 82-amino-acid chain: DNA-directed RNA polymerase subunit omega (82 aa).

It belongs to the RNA polymerase subunit omega family. In terms of assembly, the RNAP catalytic core consists of 2 alpha, 1 beta, 1 beta' and 1 omega subunit. When a sigma factor is associated with the core the holoenzyme is formed, which can initiate transcription.

The enzyme catalyses RNA(n) + a ribonucleoside 5'-triphosphate = RNA(n+1) + diphosphate. Promotes RNA polymerase assembly. Latches the N- and C-terminal regions of the beta' subunit thereby facilitating its interaction with the beta and alpha subunits. The protein is DNA-directed RNA polymerase subunit omega of Lachnoclostridium phytofermentans (strain ATCC 700394 / DSM 18823 / ISDg) (Clostridium phytofermentans).